Consider the following 402-residue polypeptide: Glutamyl-tRNA reductase (402 aa).

Residues Thr-48–Arg-51, Ser-91, Glu-96–Gln-98, and Gln-102 contribute to the substrate site. The active-site Nucleophile is the Cys-49. Residue Gly-171–Gly-176 participates in NADP(+) binding.

This sequence belongs to the glutamyl-tRNA reductase family. As to quaternary structure, homodimer.

The catalysed reaction is (S)-4-amino-5-oxopentanoate + tRNA(Glu) + NADP(+) = L-glutamyl-tRNA(Glu) + NADPH + H(+). The protein operates within porphyrin-containing compound metabolism; protoporphyrin-IX biosynthesis; 5-aminolevulinate from L-glutamyl-tRNA(Glu): step 1/2. Catalyzes the NADPH-dependent reduction of glutamyl-tRNA(Glu) to glutamate 1-semialdehyde (GSA). The chain is Glutamyl-tRNA reductase from Methanothermobacter thermautotrophicus (strain ATCC 29096 / DSM 1053 / JCM 10044 / NBRC 100330 / Delta H) (Methanobacterium thermoautotrophicum).